The following is a 504-amino-acid chain: Maturase K (504 aa).

It belongs to the intron maturase 2 family. MatK subfamily.

The protein localises to the plastid. It localises to the chloroplast. Its function is as follows. Usually encoded in the trnK tRNA gene intron. Probably assists in splicing its own and other chloroplast group II introns. This Quercus robur (English oak) protein is Maturase K.